Consider the following 128-residue polypeptide: Sulfurtransferase TusD (128 aa).

Cysteine 78 (cysteine persulfide intermediate) is an active-site residue.

This sequence belongs to the DsrE/TusD family. As to quaternary structure, heterohexamer, formed by a dimer of trimers. The hexameric TusBCD complex contains 2 copies each of TusB, TusC and TusD. The TusBCD complex interacts with TusE.

It localises to the cytoplasm. Part of a sulfur-relay system required for 2-thiolation of 5-methylaminomethyl-2-thiouridine (mnm(5)s(2)U) at tRNA wobble positions. Accepts sulfur from TusA and transfers it in turn to TusE. The sequence is that of Sulfurtransferase TusD from Escherichia coli (strain K12 / MC4100 / BW2952).